A 150-amino-acid chain; its full sequence is MAKIILRHLIEIPVRYQEEFEARGLEDCRLDHALYALPGPTIVDLRKTRAAQSPPVDSAAETPPREGKSHFQILLDVVQFLPEDIIIQTFEGWLLIKAQHGTRMDEHGFISRSFTRQYKLPDGVEIKDLSAVLCHDGILVVEVKDPVGTK.

Residues 47–150 enclose the sHSP domain; it reads KTRAAQSPPV…VEVKDPVGTK (104 aa).

This sequence belongs to the small heat shock protein (HSP20) family.

Its subcellular location is the cytoplasm. The protein resides in the nucleus. Inhibitor of actin polymerization. This is Heat shock protein beta-3 (HSPB3) from Homo sapiens (Human).